The following is a 253-amino-acid chain: 5'/3'-nucleotidase SurE (253 aa).

Residues aspartate 8, aspartate 9, serine 39, and asparagine 92 each coordinate a divalent metal cation.

The protein belongs to the SurE nucleotidase family. It depends on a divalent metal cation as a cofactor.

It localises to the cytoplasm. It carries out the reaction a ribonucleoside 5'-phosphate + H2O = a ribonucleoside + phosphate. It catalyses the reaction a ribonucleoside 3'-phosphate + H2O = a ribonucleoside + phosphate. The enzyme catalyses [phosphate](n) + H2O = [phosphate](n-1) + phosphate + H(+). Nucleotidase with a broad substrate specificity as it can dephosphorylate various ribo- and deoxyribonucleoside 5'-monophosphates and ribonucleoside 3'-monophosphates with highest affinity to 3'-AMP. Also hydrolyzes polyphosphate (exopolyphosphatase activity) with the preference for short-chain-length substrates (P20-25). Might be involved in the regulation of dNTP and NTP pools, and in the turnover of 3'-mononucleotides produced by numerous intracellular RNases (T1, T2, and F) during the degradation of various RNAs. This is 5'/3'-nucleotidase SurE from Serratia proteamaculans (strain 568).